We begin with the raw amino-acid sequence, 310 residues long: Ribosome production factor 2 homolog (310 aa).

Residues 29–239 enclose the Brix domain; sequence KKTLILHGTK…VRRHRYPVES (211 aa). The tract at residues 281–310 is disordered; it reads LSNDVKGLKRERREAKKNKDHSKKQKINPE. Over residues 295-310 the composition is skewed to basic residues; the sequence is AKKNKDHSKKQKINPE.

This sequence belongs to the RPF2 family.

Its subcellular location is the nucleus. The protein resides in the nucleolus. This Oryza sativa subsp. japonica (Rice) protein is Ribosome production factor 2 homolog.